We begin with the raw amino-acid sequence, 219 residues long: NADH-quinone oxidoreductase subunit C (219 aa).

This sequence belongs to the complex I 30 kDa subunit family. As to quaternary structure, NDH-1 is composed of 14 different subunits. Subunits NuoB, C, D, E, F, and G constitute the peripheral sector of the complex.

The protein localises to the cell inner membrane. The enzyme catalyses a quinone + NADH + 5 H(+)(in) = a quinol + NAD(+) + 4 H(+)(out). Functionally, NDH-1 shuttles electrons from NADH, via FMN and iron-sulfur (Fe-S) centers, to quinones in the respiratory chain. The immediate electron acceptor for the enzyme in this species is believed to be ubiquinone. Couples the redox reaction to proton translocation (for every two electrons transferred, four hydrogen ions are translocated across the cytoplasmic membrane), and thus conserves the redox energy in a proton gradient. The chain is NADH-quinone oxidoreductase subunit C from Methylorubrum populi (strain ATCC BAA-705 / NCIMB 13946 / BJ001) (Methylobacterium populi).